Reading from the N-terminus, the 423-residue chain is Serine incorporator 5 (423 aa).

The Extracellular segment spans residues 1–36 (MSAQCCAGQLACCCGSAGCSLCCDCCPRIRQSLSTR). Residues 37 to 57 (FMYALYFILVVVLCCIMMSTT) form a helical membrane-spanning segment. At 58–89 (VAHKMKEHIPFFEDMCKGIKAGDTCEKLVGYS) the chain is on the cytoplasmic side. A helical membrane pass occupies residues 90-110 (AVYRVCFGMACFFFIFCLLTL). Topologically, residues 111-124 (KINNSKSCRAHIHN) are extracellular. An N-linked (GlcNAc...) asparagine glycan is attached at Asn113. The chain crosses the membrane as a helical span at residues 125–145 (GFWFFKLLLLGAMCSGAFFIP). Residues 146-156 (DQDTFLNAWRY) lie on the Cytoplasmic side of the membrane. A helical membrane pass occupies residues 157 to 177 (VGAVGGFLFIGIQLLLLVEFA). Residues 178-198 (HKWNKNWTAGTASNKLWYASL) lie on the Extracellular side of the membrane. N-linked (GlcNAc...) asparagine glycosylation occurs at Asn183. A helical membrane pass occupies residues 199–219 (ALVTLIMYSIATGGLVLMAVF). Topologically, residues 220-230 (YTQKDSCMENK) are cytoplasmic. The chain crosses the membrane as a helical span at residues 231-251 (ILLGVNGGLCLLISLVAISPW). Over 252 to 258 (VQNRQPH) the chain is Extracellular. A helical transmembrane segment spans residues 259 to 279 (SGLLQSGVISCYVTYLTFSAL). Residues 280 to 311 (SSKPAEVVLDEHGKNVTICVPDFGQDLYRDEN) are Cytoplasmic-facing. The chain crosses the membrane as a helical span at residues 312-332 (LVTILGTSLLIGCILYSCLTS). Residues 333-385 (TTRSSSDALQGRYAAPELEIARCCFCFSPGGEDTEEQQPGKEGPRVIYDEKKG) lie on the Extracellular side of the membrane. A helical transmembrane segment spans residues 386–406 (TVYIYSYFHFVFFLASLYVMM). At 407–423 (TVTNWFNHVRSAFHLLP) the chain is on the cytoplasmic side.

This sequence belongs to the TDE1 family. As to expression, highly expressed in placenta, skeletal muscle, spleen, thymus, testis and peripheral leukocyte and is expressed weakly in the heart, liver and fetal brain.

Its subcellular location is the cell membrane. It localises to the cytoplasm. The protein localises to the perinuclear region. The catalysed reaction is a 1,2-diacyl-sn-glycero-3-phospho-L-serine(in) = a 1,2-diacyl-sn-glycero-3-phospho-L-serine(out). It carries out the reaction a 1,2-diacyl-sn-glycero-3-phosphocholine(in) = a 1,2-diacyl-sn-glycero-3-phosphocholine(out). It catalyses the reaction a 1,2-diacyl-sn-glycero-3-phosphoethanolamine(in) = a 1,2-diacyl-sn-glycero-3-phosphoethanolamine(out). Its function is as follows. Restriction factor required to restrict infectivity of lentiviruses, such as HIV-1: acts by inhibiting an early step of viral infection. Impairs the penetration of the viral particle into the cytoplasm. Non-ATP-dependent, non-specific lipid transporter for phosphatidylserine, phosphatidylcholine, and phosphatidylethanolamine. Functions as a scramblase that flips lipids in both directions across the membrane. Phospholipid scrambling results in HIV-1 surface exposure of phosphatidylserine and loss of membrane asymmetry, which leads to changes in HIV-1 Env conformation and loss of infectivity. Enhances the incorporation of serine into phosphatidylserine and sphingolipids. May play a role in providing serine molecules for the formation of myelin glycosphingolipids in oligodendrocytes. In Homo sapiens (Human), this protein is Serine incorporator 5.